The following is a 112-amino-acid chain: UPF0102 protein Cla_1413 (112 aa).

The protein belongs to the UPF0102 family.

This Campylobacter lari (strain RM2100 / D67 / ATCC BAA-1060) protein is UPF0102 protein Cla_1413.